The sequence spans 239 residues: 1-(5-phosphoribosyl)-5-[(5-phosphoribosylamino)methylideneamino] imidazole-4-carboxamide isomerase (239 aa).

The active-site Proton acceptor is the D9. The active-site Proton donor is D131.

Belongs to the HisA/HisF family.

The protein resides in the cytoplasm. It catalyses the reaction 1-(5-phospho-beta-D-ribosyl)-5-[(5-phospho-beta-D-ribosylamino)methylideneamino]imidazole-4-carboxamide = 5-[(5-phospho-1-deoxy-D-ribulos-1-ylimino)methylamino]-1-(5-phospho-beta-D-ribosyl)imidazole-4-carboxamide. Its pathway is amino-acid biosynthesis; L-histidine biosynthesis; L-histidine from 5-phospho-alpha-D-ribose 1-diphosphate: step 4/9. This chain is 1-(5-phosphoribosyl)-5-[(5-phosphoribosylamino)methylideneamino] imidazole-4-carboxamide isomerase, found in Phocaeicola vulgatus (strain ATCC 8482 / DSM 1447 / JCM 5826 / CCUG 4940 / NBRC 14291 / NCTC 11154) (Bacteroides vulgatus).